We begin with the raw amino-acid sequence, 228 residues long: Orotidine 5'-phosphate decarboxylase (228 aa).

Residues Asp-8, Lys-30, 59-68 (DLKLHDIPNT), Thr-118, Arg-178, Gln-187, Gly-207, and Arg-208 contribute to the substrate site. The Proton donor role is filled by Lys-61.

This sequence belongs to the OMP decarboxylase family. Type 1 subfamily. In terms of assembly, homodimer.

It carries out the reaction orotidine 5'-phosphate + H(+) = UMP + CO2. It participates in pyrimidine metabolism; UMP biosynthesis via de novo pathway; UMP from orotate: step 2/2. Functionally, catalyzes the decarboxylation of orotidine 5'-monophosphate (OMP) to uridine 5'-monophosphate (UMP). This chain is Orotidine 5'-phosphate decarboxylase, found in Wolinella succinogenes (strain ATCC 29543 / DSM 1740 / CCUG 13145 / JCM 31913 / LMG 7466 / NCTC 11488 / FDC 602W) (Vibrio succinogenes).